The sequence spans 569 residues: Glycylpeptide N-tetradecanoyltransferase (569 aa).

A compositionally biased stretch (basic and acidic residues) spans 1–18 (MPPTEESKPVDPAQEKQA). Residues 1-82 (MPPTEESKPV…STESSAEVGL (82 aa)) form a disordered region. Residues 55 to 68 (TKKKNKKKSKKKNK) are compositionally biased toward basic residues. Tetradecanoyl-CoA-binding positions include 158–161 (YKFW), 291–293 (LCI), and 299–303 (GKRLA). Val569 serves as the catalytic Proton acceptor; via carboxylate.

Belongs to the NMT family. As to quaternary structure, monomer.

The protein resides in the cytoplasm. It catalyses the reaction N-terminal glycyl-[protein] + tetradecanoyl-CoA = N-tetradecanoylglycyl-[protein] + CoA + H(+). In terms of biological role, adds a myristoyl group to the N-terminal glycine residue of certain cellular proteins. This chain is Glycylpeptide N-tetradecanoyltransferase (gtt-1), found in Neurospora crassa (strain ATCC 24698 / 74-OR23-1A / CBS 708.71 / DSM 1257 / FGSC 987).